Here is a 262-residue protein sequence, read N- to C-terminus: Small ribosomal subunit protein eS4B (262 aa).

Residues 42–105 (LPLIVFLRNR…GEHFRLVYDI (64 aa)) enclose the S4 RNA-binding domain. Serine 223 carries the phosphoserine modification.

It belongs to the eukaryotic ribosomal protein eS4 family. Component of the small ribosomal subunit (SSU). Mature yeast ribosomes consist of a small (40S) and a large (60S) subunit. The 40S small subunit contains 1 molecule of ribosomal RNA (18S rRNA) and at least 33 different proteins. The large 60S subunit contains 3 rRNA molecules (25S, 5.8S and 5S rRNA) and at least 46 different proteins.

It is found in the cytoplasm. The protein resides in the nucleus. Its subcellular location is the nucleolus. In terms of biological role, component of the ribosome, a large ribonucleoprotein complex responsible for the synthesis of proteins in the cell. The small ribosomal subunit (SSU) binds messenger RNAs (mRNAs) and translates the encoded message by selecting cognate aminoacyl-transfer RNA (tRNA) molecules. The large subunit (LSU) contains the ribosomal catalytic site termed the peptidyl transferase center (PTC), which catalyzes the formation of peptide bonds, thereby polymerizing the amino acids delivered by tRNAs into a polypeptide chain. The nascent polypeptides leave the ribosome through a tunnel in the LSU and interact with protein factors that function in enzymatic processing, targeting, and the membrane insertion of nascent chains at the exit of the ribosomal tunnel. This Schizosaccharomyces pombe (strain 972 / ATCC 24843) (Fission yeast) protein is Small ribosomal subunit protein eS4B (rps402).